The primary structure comprises 101 residues: MFVKKGDKVRVIAGKDKGTEAVVLKALPKVNKVVVEGVAIIKKHQKPSAENPQGAIVEKEAPIHASNVQVLDKNGVAGRVGYKVVDGKKVRYNKKSGEVLD.

The protein belongs to the universal ribosomal protein uL24 family. Part of the 50S ribosomal subunit.

One of two assembly initiator proteins, it binds directly to the 5'-end of the 23S rRNA, where it nucleates assembly of the 50S subunit. Functionally, one of the proteins that surrounds the polypeptide exit tunnel on the outside of the subunit. The sequence is that of Large ribosomal subunit protein uL24 from Streptococcus thermophilus (strain ATCC BAA-491 / LMD-9).